A 548-amino-acid chain; its full sequence is Chaperonin GroEL (548 aa).

Residues 30-33 (TLGP), K51, 87-91 (DGTTT), G415, 478-480 (NAA), and D494 each bind ATP.

The protein belongs to the chaperonin (HSP60) family. Forms a cylinder of 14 subunits composed of two heptameric rings stacked back-to-back. Interacts with the co-chaperonin GroES.

The protein resides in the cytoplasm. It carries out the reaction ATP + H2O + a folded polypeptide = ADP + phosphate + an unfolded polypeptide.. In terms of biological role, together with its co-chaperonin GroES, plays an essential role in assisting protein folding. The GroEL-GroES system forms a nano-cage that allows encapsulation of the non-native substrate proteins and provides a physical environment optimized to promote and accelerate protein folding. This is Chaperonin GroEL from Janthinobacterium sp. (strain Marseille) (Minibacterium massiliensis).